Reading from the N-terminus, the 417-residue chain is Gamma-glutamyl phosphate reductase (417 aa).

It belongs to the gamma-glutamyl phosphate reductase family.

It localises to the cytoplasm. It catalyses the reaction L-glutamate 5-semialdehyde + phosphate + NADP(+) = L-glutamyl 5-phosphate + NADPH + H(+). The protein operates within amino-acid biosynthesis; L-proline biosynthesis; L-glutamate 5-semialdehyde from L-glutamate: step 2/2. Functionally, catalyzes the NADPH-dependent reduction of L-glutamate 5-phosphate into L-glutamate 5-semialdehyde and phosphate. The product spontaneously undergoes cyclization to form 1-pyrroline-5-carboxylate. The sequence is that of Gamma-glutamyl phosphate reductase from Chlorobium phaeobacteroides (strain BS1).